A 400-amino-acid polypeptide reads, in one-letter code: Acetylornithine aminotransferase (400 aa).

Pyridoxal 5'-phosphate-binding positions include 102-103 (GA) and Phe-135. Arg-138 contacts N(2)-acetyl-L-ornithine. 220 to 223 (DEVQ) provides a ligand contact to pyridoxal 5'-phosphate. Position 249 is an N6-(pyridoxal phosphate)lysine (Lys-249). A N(2)-acetyl-L-ornithine-binding site is contributed by Ser-276. Residue Thr-277 participates in pyridoxal 5'-phosphate binding.

Belongs to the class-III pyridoxal-phosphate-dependent aminotransferase family. ArgD subfamily. In terms of assembly, homodimer. The cofactor is pyridoxal 5'-phosphate.

The protein localises to the cytoplasm. The enzyme catalyses N(2)-acetyl-L-ornithine + 2-oxoglutarate = N-acetyl-L-glutamate 5-semialdehyde + L-glutamate. It functions in the pathway amino-acid biosynthesis; L-arginine biosynthesis; N(2)-acetyl-L-ornithine from L-glutamate: step 4/4. In Gloeobacter violaceus (strain ATCC 29082 / PCC 7421), this protein is Acetylornithine aminotransferase.